The primary structure comprises 383 residues: Deoxyguanosinetriphosphate triphosphohydrolase-like protein (383 aa).

The HD domain maps to 62–198; the sequence is RLTHSLEVST…ASLADDISYI (137 aa).

Belongs to the dGTPase family. Type 2 subfamily.

This is Deoxyguanosinetriphosphate triphosphohydrolase-like protein from Rickettsia prowazekii (strain Madrid E).